Here is a 1045-residue protein sequence, read N- to C-terminus: MEATTSLLDAAAVGDLVMLDPLSEESLLRTLQERFSRGEIYTYIGEVVISVNPYKPLPIYTPEKVEEYHNCNFFAVKPHIYAIADDAYRSLRDRDRDQCILITGESGAGKTEASKLVMSYVAAVSSKGEEVDKVKEQLLQSNPVLEAFGNAKTIRNDNSSRFGKYMDVEFDFKGDPLGGVISNYLLEKSRIVRHVKGERNFHIFYQLLAGGSAQLLQQLKLRPDCSHYGYLNHEKSVLPGMDDAANFRAMQDAMAIIGFAPAEVTALLEVTAVVLKLGNVKLSSCFQASGMEASSITEPRELQEISQLIGLDPSTLEQALCSRTVKVRDESVLTALSVSQGYYGRDALAKNIYSRLFDWLVNRINTSIQVKPGKQRKVMGVLDIYGFEIFQDNGFEQFIINYCNEKLQQIFILMTLKEEQEEYVREGIQWTPVEFFDNSIICDLIENSKVGILAMLDEECLRPGTVNEDTFITKLNQIFASHKRYESKETLNAKHVTDVSLPLRCFRIHHYAGKVTYNVTGFIEKNNDLLFRDLSQAMWAARHTLLRSLFPEGDPQRPSLKLPPTTGSQFKASVATLMKNLYSKNPNYIRCIKPNDTKTAMLFTPDLVLAQVRYLGLMENVRVRRAGYAFRQLYQPFLERYKMLSRKTWPRWTGGDREGAEVLLAELKFPPEELAYGHTKIFIRSPRTLFDLEKRRQQRVAELATLIQKMFRGWCCRKRYQLMRKSQILISAWFRGHMQRNRYKQMKRSVLLLQAYARGWKTRRMYRRYFRSDACTRLSNFIYRRMVQKYLMGLQKNLPPMAVLDRTWPPAPYKFLSDANQELKSIFYRWKCKKYREQLTPQQRAMLQAKLCASELFKDKKALYAQSLQQPFRGEYLGLTQNRKYQKLQAVAKDKLVMAEAVQKVNRANGKTVPRLLLLTTEHLVLADPKAAQPKMVLSLCDIQGASVSRFSDGLLALHLKETSTAGGKGDLLLVSPHLIELVTRLHQTLMDATAQALPLSIADQFSTRFPKGDVAVTVVESAKGGGDVPVCKKRGSHKMEILVH.

Residues 11 to 697 enclose the Myosin motor domain; sequence AAVGDLVMLD…TLFDLEKRRQ (687 aa). 104–111 serves as a coordination point for ATP; the sequence is GESGAGKT. The segment at 574–596 is actin-binding; that stretch reads VATLMKNLYSKNPNYIRCIKPND. IQ domains follow at residues 701-727, 723-750, and 746-774; these read AELA…RKSQ, MRKS…KRSV, and MKRS…RSDA. Residues 861–1044 enclose the TH1 domain; the sequence is KALYAQSLQQ…RGSHKMEILV (184 aa).

It belongs to the TRAFAC class myosin-kinesin ATPase superfamily. Myosin family. In terms of tissue distribution, intestine.

In terms of biological role, could play an important role in morphogenesis and function of intestinal microvilli. This chain is Unconventional myosin-Ia (MYO1A), found in Gallus gallus (Chicken).